A 430-amino-acid polypeptide reads, in one-letter code: Inner membrane transport protein YbaT (430 aa).

Over M1–G14 the chain is Cytoplasmic. The helical transmembrane segment at L15–L35 threads the bilayer. Topologically, residues G36–A38 are periplasmic. The helical transmembrane segment at A39 to F59 threads the bilayer. The Cytoplasmic portion of the chain corresponds to S60–G88. A helical transmembrane segment spans residues V89–V109. The Periplasmic portion of the chain corresponds to A110–E128. Residues H129–S149 traverse the membrane as a helical segment. The Cytoplasmic segment spans residues N150–E157. A helical transmembrane segment spans residues V158–S178. Over L179–S192 the chain is Periplasmic. Residues G193–A213 form a helical membrane-spanning segment. The Cytoplasmic segment spans residues N214–R228. Residues A229–L249 traverse the membrane as a helical segment. Topologically, residues S250 to L272 are periplasmic. A helical membrane pass occupies residues L273–I293. Residues N294 to S325 lie on the Cytoplasmic side of the membrane. A helical transmembrane segment spans residues T326–G346. Position 347 (S347) is a topological domain, periplasmic. The helical transmembrane segment at L348–I368 threads the bilayer. At R369–P379 the chain is on the cytoplasmic side. A helical membrane pass occupies residues I380–W400. At S401–G403 the chain is on the periplasmic side. The helical transmembrane segment at S404–M424 threads the bilayer. Topologically, residues K425 to V430 are cytoplasmic.

It belongs to the amino acid-polyamine-organocation (APC) superfamily.

It is found in the cell inner membrane. Probable amino-acid or metabolite transport protein. The polypeptide is Inner membrane transport protein YbaT (ybaT) (Escherichia coli (strain K12)).